The chain runs to 280 residues: Keratin, type I cytoskeletal 47 kDa (280 aa).

Positions 1 to 81 (MSFRSSSSYS…SSSFSSFGGN (81 aa)) are head. Residues 82-117 (DKQTMQNLNDRLASYLEKVRALEAANADLELKIREW) form a coil 1A region. Residues 82–280 (DKQTMQNLND…RDAELWFNQK (199 aa)) form the IF rod domain. Residues 118–139 (YEKQKGSGIGAASKDFSKYFEI) form a linker 1 region. Positions 140 to 231 (ISDLRNKILF…KNHEEEMSIA (92 aa)) are coil 1B. The segment at 232 to 254 (KGSAAGQVTVEMDAAPGVDLNKI) is linker 12. The tract at residues 255-280 (LSDMRADYETLAEKNRRDAELWFNQK) is coil 2.

It belongs to the intermediate filament family. Heterotetramer of two type I and two type II keratins.

The chain is Keratin, type I cytoskeletal 47 kDa (xk81b1) from Xenopus laevis (African clawed frog).